We begin with the raw amino-acid sequence, 409 residues long: Ubiquitin-associated domain-containing protein 1 (409 aa).

The residue at position 1 (M1) is an N-acetylmethionine. Residues 14-98 (LRLHICAADG…LLLIKKRVPS (85 aa)) form the Ubiquitin-like domain. A disordered region spans residues 101 to 122 (PKMADVSAEEKKKQEQKAPDKD). Over residues 108–122 (AEEKKKQEQKAPDKD) the composition is skewed to basic and acidic residues. Residues 187–231 (DEDERVDETALRQLTEMGFPESRASKALRLNHMSVPQAMEWLIEH) enclose the UBA 1 domain. A disordered region spans residues 239–273 (TPLPGHAAQAGASAAATTSSTSSEAAVGTSVEDEE). Low complexity predominate over residues 245–268 (AAQAGASAAATTSSTSSEAAVGTS). The region spanning 292-332 (RADARAVISLMEMGFDEKEVIDALRVNNNQQNAACEWLLGD) is the UBA 2 domain. The region spanning 357–396 (NPVVQLGLTNPKTLLAFEDMLENPLNSTQWMNDPETGPVM) is the STI1 domain.

Component of the KPC complex composed of RNF123/KPC1 and UBAC1/KPC2. Interacts (via ubiquitin-like domain) with RNF123. Interacts (via ubiquitin-like and UBA domains) with the proteasome via its N-terminal domain.

It is found in the cytoplasm. It functions in the pathway protein modification; protein ubiquitination. Non-catalytic component of the KPC complex, a E3 ubiquitin-protein ligase complex that mediates polyubiquitination of target proteins, such as CDKN1B and NFKB1. The KPC complex catalyzes polyubiquitination and proteasome-mediated degradation of CDKN1B during G1 phase of the cell cycle. The KPC complex also acts as a key regulator of the NF-kappa-B signaling by promoting maturation of the NFKB1 component of NF-kappa-B by catalyzing ubiquitination of the NFKB1 p105 precursor. Within the KPC complex, UBAC1 acts as an adapter that promotes the transfer of target proteins that have been polyubiquitinated by RNF123/KPC1 to the 26S proteasome. The protein is Ubiquitin-associated domain-containing protein 1 (Ubac1) of Mus musculus (Mouse).